The following is a 431-amino-acid chain: Serine hydroxymethyltransferase 2 (431 aa).

(6S)-5,6,7,8-tetrahydrofolate is bound by residues L131 and 135–137 (GHL). K240 is modified (N6-(pyridoxal phosphate)lysine).

It belongs to the SHMT family. As to quaternary structure, homodimer. Pyridoxal 5'-phosphate serves as cofactor.

Its subcellular location is the cytoplasm. It catalyses the reaction (6R)-5,10-methylene-5,6,7,8-tetrahydrofolate + glycine + H2O = (6S)-5,6,7,8-tetrahydrofolate + L-serine. It functions in the pathway one-carbon metabolism; tetrahydrofolate interconversion. The protein operates within amino-acid biosynthesis; glycine biosynthesis; glycine from L-serine: step 1/1. Its function is as follows. Catalyzes the reversible interconversion of serine and glycine with tetrahydrofolate (THF) serving as the one-carbon carrier. This reaction serves as the major source of one-carbon groups required for the biosynthesis of purines, thymidylate, methionine, and other important biomolecules. Also exhibits THF-independent aldolase activity toward beta-hydroxyamino acids, producing glycine and aldehydes, via a retro-aldol mechanism. This Vibrio parahaemolyticus serotype O3:K6 (strain RIMD 2210633) protein is Serine hydroxymethyltransferase 2.